We begin with the raw amino-acid sequence, 430 residues long: Tyrosine--tRNA ligase (430 aa).

Position 32 (Tyr-32) interacts with L-tyrosine. Positions 37–46 (PTADSLHIGH) match the 'HIGH' region motif. 2 residues coordinate L-tyrosine: Tyr-172 and Gln-176. The short motif at 232–236 (KFGKT) is the 'KMSKS' region element. Residue Lys-235 participates in ATP binding. An S4 RNA-binding domain is found at 362 to 429 (VKAVDLFVDN…GKKNYYLIIA (68 aa)).

The protein belongs to the class-I aminoacyl-tRNA synthetase family. TyrS type 1 subfamily. In terms of assembly, homodimer.

It localises to the cytoplasm. It carries out the reaction tRNA(Tyr) + L-tyrosine + ATP = L-tyrosyl-tRNA(Tyr) + AMP + diphosphate + H(+). In terms of biological role, catalyzes the attachment of tyrosine to tRNA(Tyr) in a two-step reaction: tyrosine is first activated by ATP to form Tyr-AMP and then transferred to the acceptor end of tRNA(Tyr). In Bacteroides fragilis (strain YCH46), this protein is Tyrosine--tRNA ligase.